Here is a 241-residue protein sequence, read N- to C-terminus: tRNA pseudouridine synthase A (241 aa).

Residue Asp-51 is the Nucleophile of the active site. Residue Tyr-110 coordinates substrate.

Belongs to the tRNA pseudouridine synthase TruA family. As to quaternary structure, homodimer.

The enzyme catalyses uridine(38/39/40) in tRNA = pseudouridine(38/39/40) in tRNA. Its function is as follows. Formation of pseudouridine at positions 38, 39 and 40 in the anticodon stem and loop of transfer RNAs. This chain is tRNA pseudouridine synthase A, found in Campylobacter jejuni subsp. jejuni serotype O:2 (strain ATCC 700819 / NCTC 11168).